The primary structure comprises 124 residues: Fluoride-specific ion channel FluC (124 aa).

4 consecutive transmembrane segments (helical) span residues 4 to 24 (VLYI…LSGW), 32 to 52 (AFPY…GLIM), 67 to 87 (IGLT…SYET), and 101 to 121 (ANVL…IIVA). G75 and T78 together coordinate Na(+).

Belongs to the fluoride channel Fluc/FEX (TC 1.A.43) family.

It is found in the cell inner membrane. The enzyme catalyses fluoride(in) = fluoride(out). Na(+) is not transported, but it plays an essential structural role and its presence is essential for fluoride channel function. Functionally, fluoride-specific ion channel. Important for reducing fluoride concentration in the cell, thus reducing its toxicity. This Geotalea uraniireducens (strain Rf4) (Geobacter uraniireducens) protein is Fluoride-specific ion channel FluC.